The primary structure comprises 412 residues: Serine hydroxymethyltransferase (412 aa).

(6S)-5,6,7,8-tetrahydrofolate contacts are provided by residues leucine 112 and glycine 116–leucine 118. Lysine 221 is modified (N6-(pyridoxal phosphate)lysine). Glutamate 237 is a binding site for (6S)-5,6,7,8-tetrahydrofolate.

The protein belongs to the SHMT family. Homodimer. Pyridoxal 5'-phosphate serves as cofactor.

It localises to the cytoplasm. The enzyme catalyses (6R)-5,10-methylene-5,6,7,8-tetrahydrofolate + glycine + H2O = (6S)-5,6,7,8-tetrahydrofolate + L-serine. Its pathway is one-carbon metabolism; tetrahydrofolate interconversion. The protein operates within amino-acid biosynthesis; glycine biosynthesis; glycine from L-serine: step 1/1. Its function is as follows. Catalyzes the reversible interconversion of serine and glycine with tetrahydrofolate (THF) serving as the one-carbon carrier. This reaction serves as the major source of one-carbon groups required for the biosynthesis of purines, thymidylate, methionine, and other important biomolecules. Also exhibits THF-independent aldolase activity toward beta-hydroxyamino acids, producing glycine and aldehydes, via a retro-aldol mechanism. In Malacoplasma penetrans (strain HF-2) (Mycoplasma penetrans), this protein is Serine hydroxymethyltransferase.